The primary structure comprises 302 residues: Sulfate adenylyltransferase subunit 2 (302 aa).

Belongs to the PAPS reductase family. CysD subfamily. As to quaternary structure, heterodimer composed of CysD, the smaller subunit, and CysN.

The catalysed reaction is sulfate + ATP + H(+) = adenosine 5'-phosphosulfate + diphosphate. It participates in sulfur metabolism; hydrogen sulfide biosynthesis; sulfite from sulfate: step 1/3. Functionally, with CysN forms the ATP sulfurylase (ATPS) that catalyzes the adenylation of sulfate producing adenosine 5'-phosphosulfate (APS) and diphosphate, the first enzymatic step in sulfur assimilation pathway. APS synthesis involves the formation of a high-energy phosphoric-sulfuric acid anhydride bond driven by GTP hydrolysis by CysN coupled to ATP hydrolysis by CysD. This Shewanella pealeana (strain ATCC 700345 / ANG-SQ1) protein is Sulfate adenylyltransferase subunit 2.